The following is a 208-amino-acid chain: Thiamine-phosphate synthase (208 aa).

4-amino-2-methyl-5-(diphosphooxymethyl)pyrimidine contacts are provided by residues 37 to 41 and Asn73; that span reads QYREK. Residues Asp74 and Asp93 each coordinate Mg(2+). Ser112 provides a ligand contact to 4-amino-2-methyl-5-(diphosphooxymethyl)pyrimidine. 139–141 contacts 2-[(2R,5Z)-2-carboxy-4-methylthiazol-5(2H)-ylidene]ethyl phosphate; the sequence is TIS. Lys142 is a binding site for 4-amino-2-methyl-5-(diphosphooxymethyl)pyrimidine. Residues Gly171 and 191 to 192 each bind 2-[(2R,5Z)-2-carboxy-4-methylthiazol-5(2H)-ylidene]ethyl phosphate; that span reads IS.

The protein belongs to the thiamine-phosphate synthase family. Mg(2+) is required as a cofactor.

It catalyses the reaction 2-[(2R,5Z)-2-carboxy-4-methylthiazol-5(2H)-ylidene]ethyl phosphate + 4-amino-2-methyl-5-(diphosphooxymethyl)pyrimidine + 2 H(+) = thiamine phosphate + CO2 + diphosphate. It carries out the reaction 2-(2-carboxy-4-methylthiazol-5-yl)ethyl phosphate + 4-amino-2-methyl-5-(diphosphooxymethyl)pyrimidine + 2 H(+) = thiamine phosphate + CO2 + diphosphate. The enzyme catalyses 4-methyl-5-(2-phosphooxyethyl)-thiazole + 4-amino-2-methyl-5-(diphosphooxymethyl)pyrimidine + H(+) = thiamine phosphate + diphosphate. The protein operates within cofactor biosynthesis; thiamine diphosphate biosynthesis; thiamine phosphate from 4-amino-2-methyl-5-diphosphomethylpyrimidine and 4-methyl-5-(2-phosphoethyl)-thiazole: step 1/1. In terms of biological role, condenses 4-methyl-5-(beta-hydroxyethyl)thiazole monophosphate (THZ-P) and 2-methyl-4-amino-5-hydroxymethyl pyrimidine pyrophosphate (HMP-PP) to form thiamine monophosphate (TMP). The protein is Thiamine-phosphate synthase of Listeria welshimeri serovar 6b (strain ATCC 35897 / DSM 20650 / CCUG 15529 / CIP 8149 / NCTC 11857 / SLCC 5334 / V8).